Reading from the N-terminus, the 62-residue chain is Large ribosomal subunit protein uL30 (62 aa).

This sequence belongs to the universal ribosomal protein uL30 family. Part of the 50S ribosomal subunit.

This chain is Large ribosomal subunit protein uL30, found in Geobacillus thermodenitrificans (strain NG80-2).